We begin with the raw amino-acid sequence, 294 residues long: tRNA dimethylallyltransferase (294 aa).

10-17 is a binding site for ATP; the sequence is GITASGKS. 12–17 is a substrate binding site; sequence TASGKS. The interval 36 to 39 is interaction with substrate tRNA; the sequence is DSKQ.

Belongs to the IPP transferase family. Monomer. Mg(2+) is required as a cofactor.

It catalyses the reaction adenosine(37) in tRNA + dimethylallyl diphosphate = N(6)-dimethylallyladenosine(37) in tRNA + diphosphate. Functionally, catalyzes the transfer of a dimethylallyl group onto the adenine at position 37 in tRNAs that read codons beginning with uridine, leading to the formation of N6-(dimethylallyl)adenosine (i(6)A). The polypeptide is tRNA dimethylallyltransferase (Wolbachia sp. subsp. Drosophila simulans (strain wRi)).